Reading from the N-terminus, the 1352-residue chain is Inhibitor of Bruton tyrosine kinase (1352 aa).

ANK repeat units lie at residues 51-80 (FGRNAGHLASSCGKKGVLDWLIEKGVDLLV) and 85-114 (SGWTALHRSVFYGHIDCVWSLLKHGVSLYM). RCC1 repeat units follow at residues 141 to 194 (PTEV…FLSQ), 195 to 246 (KGQV…VLTD), and 248 to 301 (GCVY…LWTR). The BTB 1 domain maps to 565-645 (HDVTFQVGNR…MYTDTCDLLT (81 aa)). The tract at residues 692–716 (AHTLSERQKSKPKSSKKGKGVGDDD) is disordered. Positions 701 to 710 (SKPKSSKKGK) are enriched in basic residues. Residues 769–837 (YDVTMKSVDG…LYTDEAVVIK (69 aa)) enclose the BTB 2 domain. Residues 976-1002 (FKKAKTRAKKKPRKRSDSSGGYTLSDV) form a disordered region. The span at 977 to 989 (KKAKTRAKKKPRK) shows a compositional bias: basic residues. Ser991 carries the post-translational modification Phosphoserine. Residues 993 to 1002 (SSGGYTLSDV) are compositionally biased toward polar residues. Ser1005, Ser1031, Ser1034, Ser1040, Ser1046, Ser1055, Ser1084, Ser1111, Ser1113, and Ser1116 each carry phosphoserine. The tract at residues 1032-1094 (EGSYAGVASP…PTTKSAPQFI (63 aa)) is disordered. Polar residues predominate over residues 1084-1094 (SPTTKSAPQFI).

As to quaternary structure, interacts with the PH domain of BTK.

It localises to the cytoplasm. The protein resides in the membrane. In terms of biological role, acts as an inhibitor of BTK tyrosine kinase activity, thereby playing a role in B-cell development. Down-regulates BTK kinase activity, leading to interference with BTK-mediated calcium mobilization and NF-kappa-B-driven transcription. This is Inhibitor of Bruton tyrosine kinase (Ibtk) from Mus musculus (Mouse).